The following is a 598-amino-acid chain: MSASAQQLAEELQIFGLDCEEALIEKLVELCVQYGQNEEGMVGELIAFCTSTHKVGLTSEILNSFEHEFLSKRLSKARHSTCKDSGHAGARDIVSIQELIEVEEEEEILLNSYTTPSKGSQKRAISTPETPLTKRSVSTRSPHQLLSPSSFSPSATPSQKYNSRSNRGEVVTSFGLAQGVSWSGRGGAGNISLKVLGCPEALTGSYKSMFQKLPDIREVLTCKIEELGSELKEHYKIEAFTPLLAPAQEPVTLLGQIGCDSNGKLNNKSVILEGDREHSSGAQIPVDLSELKEYSLFPGQVVIMEGINTTGRKLVATKLYEGVPLPFYQPTEEDADFEQSMVLVACGPYTTSDSITYDPLLDLIAVINHDRPDVCILFGPFLDAKHEQVENCLLTSPFEDIFKQCLRTIIEGTRSSGSHLVFVPSLRDVHHEPVYPQPPFSYSDLSREDKKQVQFVSEPCSLSINGVIFGLTSTDLLFHLGAEEISSSSGTSDRFSRILKHILTQRSYYPLYPPQEDMAIDYESFYVYAQLPVTPDVLIIPSELRYFVKDVLGCVCVNPGRLTKGQVGGTFARLYLRRPAADGAERQSPCIAVQVVRI.

Residues 112–140 (SYTTPSKGSQKRAISTPETPLTKRSVSTR) are compositionally biased toward polar residues. Residues 112 to 167 (SYTTPSKGSQKRAISTPETPLTKRSVSTRSPHQLLSPSSFSPSATPSQKYNSRSNR) are disordered. Ser126 carries the phosphoserine modification. Phosphothreonine is present on residues Thr127 and Thr130. Phosphoserine is present on residues Ser141, Ser147, Ser152, and Ser154. The segment covering 141-158 (SPHQLLSPSSFSPSATPS) has biased composition (low complexity).

This sequence belongs to the DNA polymerase alpha subunit B family. Component of the alpha DNA polymerase complex (also known as the alpha DNA polymerase-primase complex) consisting of four subunits: the catalytic subunit POLA1, the regulatory subunit POLA2, and primase complex subunits PRIM1 and PRIM2 respectively. Within the complex, POLA1 directly interacts with PRIM2/p58. In terms of processing, phosphorylated in a cell cycle-dependent manner, in G2/M phase.

It localises to the nucleus. In terms of biological role, accessory subunit of the DNA polymerase alpha complex (also known as the alpha DNA polymerase-primase complex) which plays an essential role in the initiation of DNA synthesis. During the S phase of the cell cycle, the DNA polymerase alpha complex (composed of a catalytic subunit POLA1, an accessory subunit POLA2 and two primase subunits, the catalytic subunit PRIM1 and the regulatory subunit PRIM2) is recruited to DNA at the replicative forks via direct interactions with MCM10 and WDHD1. The primase subunit of the polymerase alpha complex initiates DNA synthesis by oligomerising short RNA primers on both leading and lagging strands. These primers are initially extended by the polymerase alpha catalytic subunit and subsequently transferred to polymerase delta and polymerase epsilon for processive synthesis on the lagging and leading strand, respectively. This Homo sapiens (Human) protein is DNA polymerase alpha subunit B (POLA2).